Here is a 208-residue protein sequence, read N- to C-terminus: Small ribosomal subunit protein eS8 (208 aa).

Residues 1-34 (MGISRDHWHKRRATGGKRAPIRKKRKYELGRPAA) are disordered. Residues 7-26 (HWHKRRATGGKRAPIRKKRK) are compositionally biased toward basic residues.

This sequence belongs to the eukaryotic ribosomal protein eS8 family. As to quaternary structure, component of the small ribosomal subunit. Identified in a IGF2BP1-dependent mRNP granule complex containing untranslated mRNAs. Part of the small subunit (SSU) processome, composed of more than 70 proteins and the RNA chaperone small nucleolar RNA (snoRNA) U3.

Its subcellular location is the cytoplasm. The protein resides in the membrane. The protein localises to the nucleus. It is found in the nucleolus. In terms of biological role, component of the small ribosomal subunit. The ribosome is a large ribonucleoprotein complex responsible for the synthesis of proteins in the cell. Part of the small subunit (SSU) processome, first precursor of the small eukaryotic ribosomal subunit. During the assembly of the SSU processome in the nucleolus, many ribosome biogenesis factors, an RNA chaperone and ribosomal proteins associate with the nascent pre-rRNA and work in concert to generate RNA folding, modifications, rearrangements and cleavage as well as targeted degradation of pre-ribosomal RNA by the RNA exosome. The polypeptide is Small ribosomal subunit protein eS8 (RpS8) (Spodoptera frugiperda (Fall armyworm)).